Here is a 241-residue protein sequence, read N- to C-terminus: Triosephosphate isomerase (241 aa).

Residue 9–11 (NWK) coordinates substrate. The active-site Electrophile is histidine 96. Glutamate 165 serves as the catalytic Proton acceptor. Residues glycine 171, serine 204, and 225–226 (GG) contribute to the substrate site.

Belongs to the triosephosphate isomerase family. As to quaternary structure, homodimer.

It is found in the cytoplasm. The catalysed reaction is D-glyceraldehyde 3-phosphate = dihydroxyacetone phosphate. It functions in the pathway carbohydrate biosynthesis; gluconeogenesis. Its pathway is carbohydrate degradation; glycolysis; D-glyceraldehyde 3-phosphate from glycerone phosphate: step 1/1. Involved in the gluconeogenesis. Catalyzes stereospecifically the conversion of dihydroxyacetone phosphate (DHAP) to D-glyceraldehyde-3-phosphate (G3P). The sequence is that of Triosephosphate isomerase from Prochlorococcus marinus subsp. pastoris (strain CCMP1986 / NIES-2087 / MED4).